A 134-amino-acid polypeptide reads, in one-letter code: Auxin-responsive protein SAUR40 (134 aa).

Belongs to the ARG7 family. As to quaternary structure, interacts with and inhibits PP2C-D subfamily of type 2C phosphatases such as PP2C67/PP2C-D1.

The protein localises to the cytoplasm. Provide a mechanistic link between auxin and plasma membrane H(+)-ATPases (PM H(+)-ATPases, e.g. AHA1 and AHA2), and triggers PM H(+)-ATPases activity by promoting phosphorylation of their C-terminal autoinhibitory domain as a result of PP2C-D subfamily of type 2C phosphatases inhibition, thus leading to the acidification of the apoplast and the facilitation of solutes and water uptake to drive cell expansion. Plays a role in the regulation of cell expansion, root meristem patterning and auxin transport. The protein is Auxin-responsive protein SAUR40 of Arabidopsis thaliana (Mouse-ear cress).